Reading from the N-terminus, the 130-residue chain is Small ribosomal subunit protein uS9 (130 aa).

Residues 98 to 130 form a disordered region; that stretch reads LKKAGMLTRDPRMKERKKYGLKKARKASQFSKR. The segment covering 111-130 has biased composition (basic residues); it reads KERKKYGLKKARKASQFSKR.

The protein belongs to the universal ribosomal protein uS9 family.

This Lacticaseibacillus casei (strain BL23) (Lactobacillus casei) protein is Small ribosomal subunit protein uS9.